A 643-amino-acid chain; its full sequence is Conglutin alpha 2 (643 aa).

An N-terminal signal peptide occupies residues 1 to 22 (MAKPCLFSFSLCLLLLSSLCLA). Disulfide bonds link Cys31/Cys64 and Cys107/Cys464. One can recognise a Cupin type-1 1 domain in the interval 36–261 (LNALEPDNRV…AFNVDEEIIN (226 aa)). Disordered stretches follow at residues 110–142 (TYEE…DSHQ), 190–243 (PRRF…VLSG), and 285–458 (PKSQ…SRNG). Residues 207-218 (QEQQGQQREQQQ) show a composition bias toward low complexity. 2 stretches are compositionally biased toward basic and acidic residues: residues 228–237 (HQQEQEEEGK) and 298–313 (PRQR…RREE). The span at 314-323 (EKEEEEEEDE) shows a compositional bias: acidic residues. Basic and acidic residues-rich tracts occupy residues 324 to 333 (PRSRERYERQ) and 357 to 369 (QEGR…WERT). Residues 422 to 433 (RGRHGGRGRRSG) are compositionally biased toward basic residues. The region spanning 470-616 (ENIAKPSRAD…AFGLRLNQVS (147 aa)) is the Cupin type-1 2 domain. Residues 623–632 (NQGPLVSPQS) show a composition bias toward polar residues. Positions 623–643 (NQGPLVSPQSESEDHTLPKVA) are disordered. The segment covering 634–643 (SEDHTLPKVA) has biased composition (basic and acidic residues).

This sequence belongs to the 11S seed storage protein (globulins) family. As to quaternary structure, hexamer; each subunit is composed of an acidic and a basic chain derived from a single precursor and linked by a disulfide bond. Component of globulins complexes which accumulate in seeds.

Functionally, sulfur-rich seed storage protein. This protein found in the seeds of many leguminous and non-leguminous plants is the source of sulfur-containing amino acids in seed meals. This Lupinus angustifolius (Narrow-leaved blue lupine) protein is Conglutin alpha 2.